The chain runs to 317 residues: Transaldolase (317 aa).

K126 functions as the Schiff-base intermediate with substrate in the catalytic mechanism.

The protein belongs to the transaldolase family. Type 1 subfamily. As to quaternary structure, homodimer.

It localises to the cytoplasm. The enzyme catalyses D-sedoheptulose 7-phosphate + D-glyceraldehyde 3-phosphate = D-erythrose 4-phosphate + beta-D-fructose 6-phosphate. It functions in the pathway carbohydrate degradation; pentose phosphate pathway; D-glyceraldehyde 3-phosphate and beta-D-fructose 6-phosphate from D-ribose 5-phosphate and D-xylulose 5-phosphate (non-oxidative stage): step 2/3. In terms of biological role, transaldolase is important for the balance of metabolites in the pentose-phosphate pathway. This is Transaldolase from Burkholderia lata (strain ATCC 17760 / DSM 23089 / LMG 22485 / NCIMB 9086 / R18194 / 383).